The primary structure comprises 228 residues: Aspartate racemase (228 aa).

47–49 (DRT) provides a ligand contact to substrate. The active-site Proton donor/acceptor is Cys82. Residues 83-85 (NTA) and Lys164 each bind substrate. Residue Cys194 is the Proton donor/acceptor of the active site.

Belongs to the aspartate/glutamate racemases family. In terms of assembly, homodimer. The existence of the interchain disulfide bond seen in the crystal structures is uncertain, but disulfide bonds have been reported for cytoplasmic proteins from thermophiles.

The enzyme catalyses L-aspartate = D-aspartate. With respect to regulation, weakly inhibited by citrate, but not by asparagine. The sequence is that of Aspartate racemase from Pyrococcus horikoshii (strain ATCC 700860 / DSM 12428 / JCM 9974 / NBRC 100139 / OT-3).